The chain runs to 528 residues: Na(+)/H(+) antiporter NhaB (528 aa).

Transmembrane regions (helical) follow at residues 23-45 (FAILSFLVINPVVFYLNPFVAGW), 66-86 (PGGLLAIEAVIIGMTSPSQVL), 95-115 (VLLLLIFMVAGIYFMKQLLLF), 139-159 (AFLSAFLDALTVIAVIIAVAV), 203-223 (LLMHAGVGTALGGVCTMVGEP), 241-261 (LRMSPVTVPVFVAGVLTCFLV), 310-330 (LIIGLAFHLASVGLIGLSVII), 349-369 (EEALPFTALLAVFFAIVGVII), 390-410 (LVIFYIAIGLLSMVSDNVFVG), 448-468 (ATPNGQAAFLFLLTSAIAPLI), and 476-496 (VWMALPYTIVLSIVGILAIQF).

This sequence belongs to the NhaB Na(+)/H(+) (TC 2.A.34) antiporter family.

The protein resides in the cell inner membrane. The enzyme catalyses 2 Na(+)(in) + 3 H(+)(out) = 2 Na(+)(out) + 3 H(+)(in). Functionally, na(+)/H(+) antiporter that extrudes sodium in exchange for external protons. This chain is Na(+)/H(+) antiporter NhaB, found in Shewanella piezotolerans (strain WP3 / JCM 13877).